Reading from the N-terminus, the 229-residue chain is Sperm flagellar protein 1 (229 aa).

Positions 7 to 115 (EETMQELYTW…TLRQKIEEKQ (109 aa)) constitute a Calponin-homology (CH) domain. The tract at residues 122-169 (ADLSQDQATQNNGNTHSDKGYKSNGTELSPRQGARVDPASKTHQGYAQ) is disordered. The segment covering 123 to 136 (DLSQDQATQNNGNT) has biased composition (polar residues). An essential for homodimerization and microtubule bundling activity region spans residues 178–229 (RFQLAEKEQTLILSQETIQILQAKLRRLEQLLLLKNVRIDDLTRRLQELEKK).

Homodimer.

It localises to the cytoplasm. The protein resides in the cytoskeleton. The protein localises to the cilium axoneme. Its subcellular location is the apical cell membrane. Functionally, microtubule-associated protein involved in the stabilization of microtubules along the axis of migration during radial intercalation. Promotes the establishment and stabilization of an axis of microtubules required for the active migration of cells into the outer epithelium. Microtubule-associated protein that promotes microtubule bundling and stabilizes microtubules against depolymerization in response to cold shock. Essential for ciliary central apparatus formation which requires both its microtubule-binding and bundling activities. Regulates planar cell polarity signaling pathway and asymmetric microtubule accumulation in ciliated epithelia. The polypeptide is Sperm flagellar protein 1 (Xenopus laevis (African clawed frog)).